Here is a 212-residue protein sequence, read N- to C-terminus: Placenta-specific protein 1 (212 aa).

The first 22 residues, 1-22, serve as a signal peptide directing secretion; the sequence is MKVFKFIGLMILLTSAFSAGSG.

The protein belongs to the PLAC1 family. In terms of tissue distribution, expressed in placenta. Localizes primarily to differentiated syncytiotrophoblast throughout gestation as well as to a small population of villous cytotrophoblasts. Also detected in maternal blood and rapidly disappears following delivery, but is not detected in other adult or fetal tissues examined.

Its subcellular location is the secreted. Functionally, may play a role in placental development. The sequence is that of Placenta-specific protein 1 from Homo sapiens (Human).